The chain runs to 172 residues: uncharacterized protein (172 aa).

This is an uncharacterized protein from Orgyia pseudotsugata (Douglas-fir tussock moth).